The chain runs to 312 residues: Mevalonate kinase (312 aa).

104–114 (PISCGLGSSAS) provides a ligand contact to ATP. Asp-155 serves as the catalytic Proton acceptor.

The protein belongs to the GHMP kinase family. Mevalonate kinase subfamily. As to quaternary structure, homodimer. The cofactor is Mg(2+).

The protein localises to the cytoplasm. It carries out the reaction (R)-mevalonate + ATP = (R)-5-phosphomevalonate + ADP + H(+). It functions in the pathway isoprenoid biosynthesis; isopentenyl diphosphate biosynthesis via mevalonate pathway; isopentenyl diphosphate from (R)-mevalonate: step 1/3. With respect to regulation, farnesyl- and geranyl-pyrophosphates are competitive inhibitors. Slightly inhibited by high concentration of ATP. Functionally, catalyzes the phosphorylation of (R)-mevalonate (MVA) to (R)-mevalonate 5-phosphate (MVAP). Functions in the mevalonate (MVA) pathway leading to isopentenyl diphosphate (IPP), a key precursor for the biosynthesis of isoprenoid compounds such as archaeal membrane lipids. This is Mevalonate kinase from Methanocaldococcus jannaschii (strain ATCC 43067 / DSM 2661 / JAL-1 / JCM 10045 / NBRC 100440) (Methanococcus jannaschii).